Consider the following 442-residue polypeptide: uncharacterized protein (442 aa).

Positions 1–238 (MKAEGLSGGY…QSIKAVYDTD (238 aa)) constitute an ABC transporter domain. An ATP-binding site is contributed by 33-40 (GPNGSGKT).

It belongs to the ABC transporter superfamily. The complex is composed of two ATP-binding proteins (YvrA), two transmembrane proteins (YvrB) and a solute-binding protein (YvrC).

In terms of biological role, probably part of an ABC transporter complex. Probably responsible for energy coupling to the transport system. This is an uncharacterized protein from Bacillus subtilis (strain 168).